The primary structure comprises 207 residues: Small ribosomal subunit protein uS4c (207 aa).

The S4 RNA-binding domain occupies 92-156; sequence MRLDNILFRL…YQSIITKRIE (65 aa).

It belongs to the universal ribosomal protein uS4 family. As to quaternary structure, part of the 30S ribosomal subunit. Contacts protein S5. The interaction surface between S4 and S5 is involved in control of translational fidelity.

The protein localises to the plastid. Its subcellular location is the chloroplast. In terms of biological role, one of the primary rRNA binding proteins, it binds directly to 16S rRNA where it nucleates assembly of the body of the 30S subunit. Functionally, with S5 and S12 plays an important role in translational accuracy. The protein is Small ribosomal subunit protein uS4c (rps4) of Equisetum palustre (Marsh horsetail).